The sequence spans 864 residues: Translation initiation factor IF-2 (864 aa).

Basic and acidic residues predominate over residues 140–171 (DSRSLNTKKENKLKISNKDEQNKKFNQHRESN). The tract at residues 140–179 (DSRSLNTKKENKLKISNKDEQNKKFNQHRESNSFDLNHKK) is disordered. Residues 364 to 533 (IRAPVVTIMG…LLQAEMLELK (170 aa)) form the tr-type G domain. Residues 373 to 380 (GHVDHGKT) are G1. 373–380 (GHVDHGKT) provides a ligand contact to GTP. The segment at 398–402 (GITQN) is G2. The interval 419–422 (DTPG) is G3. Residues 419 to 423 (DTPGH) and 473 to 476 (NKID) contribute to the GTP site. The interval 473–476 (NKID) is G4. The tract at residues 509-511 (SAK) is G5.

This sequence belongs to the TRAFAC class translation factor GTPase superfamily. Classic translation factor GTPase family. IF-2 subfamily.

The protein resides in the cytoplasm. Functionally, one of the essential components for the initiation of protein synthesis. Protects formylmethionyl-tRNA from spontaneous hydrolysis and promotes its binding to the 30S ribosomal subunits. Also involved in the hydrolysis of GTP during the formation of the 70S ribosomal complex. The protein is Translation initiation factor IF-2 of Buchnera aphidicola subsp. Acyrthosiphon pisum (strain Tuc7).